The primary structure comprises 97 residues: Aspartyl/glutamyl-tRNA(Asn/Gln) amidotransferase subunit C (97 aa).

This sequence belongs to the GatC family. As to quaternary structure, heterotrimer of A, B and C subunits.

It catalyses the reaction L-glutamyl-tRNA(Gln) + L-glutamine + ATP + H2O = L-glutaminyl-tRNA(Gln) + L-glutamate + ADP + phosphate + H(+). The catalysed reaction is L-aspartyl-tRNA(Asn) + L-glutamine + ATP + H2O = L-asparaginyl-tRNA(Asn) + L-glutamate + ADP + phosphate + 2 H(+). Functionally, allows the formation of correctly charged Asn-tRNA(Asn) or Gln-tRNA(Gln) through the transamidation of misacylated Asp-tRNA(Asn) or Glu-tRNA(Gln) in organisms which lack either or both of asparaginyl-tRNA or glutaminyl-tRNA synthetases. The reaction takes place in the presence of glutamine and ATP through an activated phospho-Asp-tRNA(Asn) or phospho-Glu-tRNA(Gln). This is Aspartyl/glutamyl-tRNA(Asn/Gln) amidotransferase subunit C from Prochlorococcus marinus subsp. pastoris (strain CCMP1986 / NIES-2087 / MED4).